The sequence spans 391 residues: Nutrient and stress factor 1 (391 aa).

Residues 1 to 27 (MENTTNRNTAGVLTSSNGNFATNSVAA) are compositionally biased toward polar residues. The interval 1–37 (MENTTNRNTAGVLTSSNGNFATNSVAASTPKRSKSAR) is disordered. 2 consecutive C2H2-type zinc fingers follow at residues 41 to 66 (FKCT…IRKH) and 72 to 95 (FQCP…ESVH). The interval 91–149 (RESVHAHKNHHSTSSHQRKPSSSSLSSSSSASSSSSASSSTSYSDPYRKTNINSGNMPM) is disordered. A compositionally biased stretch (basic residues) spans 96 to 109 (AHKNHHSTSSHQRK). The span at 110–134 (PSSSSLSSSSSASSSSSASSSTSYS) shows a compositional bias: low complexity. Phosphoserine is present on residues Ser-162 and Ser-163. Residues 326-374 (AFSQPPNGNKNNNMSSSKNGGKGGENFKNTDDRNDNNNKKRSETLSESD) are disordered. Residues 332-344 (NGNKNNNMSSSKN) show a composition bias toward low complexity. Positions 353–369 (KNTDDRNDNNNKKRSET) are enriched in basic and acidic residues.

It is found in the nucleus. Functionally, transcription factor that participates in the transcriptional activation of glucose-repressed genes during exponential growth in non-fermentable carbon conditions. Also involved in salt-stress response. The polypeptide is Nutrient and stress factor 1 (USV1) (Saccharomyces cerevisiae (strain ATCC 204508 / S288c) (Baker's yeast)).